The primary structure comprises 441 residues: Mannose-6-phosphate isomerase (441 aa).

The Zn(2+) site is built by Gln111, His113, Glu138, and His285. The active site involves Arg304.

It belongs to the mannose-6-phosphate isomerase type 1 family. As to quaternary structure, monomer. It depends on Zn(2+) as a cofactor.

The protein localises to the cytoplasm. The catalysed reaction is D-mannose 6-phosphate = D-fructose 6-phosphate. The protein operates within nucleotide-sugar biosynthesis; GDP-alpha-D-mannose biosynthesis; alpha-D-mannose 1-phosphate from D-fructose 6-phosphate: step 1/2. In terms of biological role, involved in the synthesis of the GDP-mannose and dolichol-phosphate-mannose required for a number of critical mannosyl transfer reactions. The sequence is that of Mannose-6-phosphate isomerase (PMI1) from Candida albicans (strain SC5314 / ATCC MYA-2876) (Yeast).